A 239-amino-acid chain; its full sequence is Fatty acid metabolism regulator protein (239 aa).

One can recognise an HTH gntR-type domain in the interval 6–74; that stretch reads KGPASFAEKY…HGKPTQVNNF (69 aa). The H-T-H motif DNA-binding region spans 34–53; sequence ERELSELIGVTRTTLREVLQ.

As to quaternary structure, homodimer.

The protein localises to the cytoplasm. Multifunctional regulator of fatty acid metabolism. In Shewanella frigidimarina (strain NCIMB 400), this protein is Fatty acid metabolism regulator protein.